Reading from the N-terminus, the 448-residue chain is Adenylosuccinate synthetase (448 aa).

GTP contacts are provided by residues 36 to 42 and 64 to 66; these read GDEGKGK and GHT. Catalysis depends on Asp37, which acts as the Proton acceptor. Mg(2+) contacts are provided by Asp37 and Gly64. Residues 37–40, 62–65, Thr154, Arg168, Asn246, Thr261, and Arg325 contribute to the IMP site; these read DEGK and NAGH. The active-site Proton donor is the His65. 321-327 serves as a coordination point for substrate; it reads VTTKRKR. Residues Arg327, 353–355, and 436–438 each bind GTP; these read KLD and GVG.

It belongs to the adenylosuccinate synthetase family. As to quaternary structure, homodimer. Mg(2+) serves as cofactor.

The protein localises to the cytoplasm. It carries out the reaction IMP + L-aspartate + GTP = N(6)-(1,2-dicarboxyethyl)-AMP + GDP + phosphate + 2 H(+). It functions in the pathway purine metabolism; AMP biosynthesis via de novo pathway; AMP from IMP: step 1/2. Functionally, plays an important role in the de novo pathway and in the salvage pathway of purine nucleotide biosynthesis. Catalyzes the first committed step in the biosynthesis of AMP from IMP. The sequence is that of Adenylosuccinate synthetase from Drosophila virilis (Fruit fly).